The primary structure comprises 369 residues: Peptide chain release factor 1 (369 aa).

Residue Q234 is modified to N5-methylglutamine.

Belongs to the prokaryotic/mitochondrial release factor family. In terms of processing, methylated by PrmC. Methylation increases the termination efficiency of RF1.

It localises to the cytoplasm. Peptide chain release factor 1 directs the termination of translation in response to the peptide chain termination codons UAG and UAA. This Kocuria rhizophila (strain ATCC 9341 / DSM 348 / NBRC 103217 / DC2201) protein is Peptide chain release factor 1.